The chain runs to 615 residues: 1-deoxy-D-xylulose-5-phosphate synthase (615 aa).

Thiamine diphosphate contacts are provided by residues histidine 76 and 117-119 (GHS). Residue aspartate 148 coordinates Mg(2+). Thiamine diphosphate-binding positions include 149 to 150 (GA), asparagine 177, tyrosine 284, and glutamate 365. Asparagine 177 is a binding site for Mg(2+).

The protein belongs to the transketolase family. DXPS subfamily. Homodimer. Requires Mg(2+) as cofactor. Thiamine diphosphate is required as a cofactor.

It catalyses the reaction D-glyceraldehyde 3-phosphate + pyruvate + H(+) = 1-deoxy-D-xylulose 5-phosphate + CO2. It participates in metabolic intermediate biosynthesis; 1-deoxy-D-xylulose 5-phosphate biosynthesis; 1-deoxy-D-xylulose 5-phosphate from D-glyceraldehyde 3-phosphate and pyruvate: step 1/1. Functionally, catalyzes the acyloin condensation reaction between C atoms 2 and 3 of pyruvate and glyceraldehyde 3-phosphate to yield 1-deoxy-D-xylulose-5-phosphate (DXP). This Francisella tularensis subsp. mediasiatica (strain FSC147) protein is 1-deoxy-D-xylulose-5-phosphate synthase.